Here is a 233-residue protein sequence, read N- to C-terminus: tRNA (guanine-N(7)-)-methyltransferase (233 aa).

Residues E64, E89, D116, and D138 each contribute to the S-adenosyl-L-methionine site. The active site involves D138. Residues K142, D174, and 212 to 215 (TRYE) contribute to the substrate site.

Belongs to the class I-like SAM-binding methyltransferase superfamily. TrmB family.

The catalysed reaction is guanosine(46) in tRNA + S-adenosyl-L-methionine = N(7)-methylguanosine(46) in tRNA + S-adenosyl-L-homocysteine. Its pathway is tRNA modification; N(7)-methylguanine-tRNA biosynthesis. In terms of biological role, catalyzes the formation of N(7)-methylguanine at position 46 (m7G46) in tRNA. The chain is tRNA (guanine-N(7)-)-methyltransferase from Rhizobium johnstonii (strain DSM 114642 / LMG 32736 / 3841) (Rhizobium leguminosarum bv. viciae).